The sequence spans 369 residues: Protein disulfide-isomerase erp38 (369 aa).

The first 18 residues, 1-18 (MVLLKSLVVASLAAAVAA), serve as a signal peptide directing secretion. 2 consecutive Thioredoxin domains span residues 19–130 (KSAV…EKTG) and 131–251 (VKAR…EKAG). Active-site nucleophile residues include Cys50, Cys53, Cys170, and Cys173. 2 disulfides stabilise this stretch: Cys50–Cys53 and Cys170–Cys173. The Prevents secretion from ER motif lies at 366 to 369 (KEEL).

The protein belongs to the protein disulfide isomerase family.

It localises to the endoplasmic reticulum lumen. It catalyses the reaction Catalyzes the rearrangement of -S-S- bonds in proteins.. This Neurospora crassa (strain ATCC 24698 / 74-OR23-1A / CBS 708.71 / DSM 1257 / FGSC 987) protein is Protein disulfide-isomerase erp38 (erp38).